The following is a 463-amino-acid chain: Cytochrome P450 4d8 (463 aa).

Glu267 and Cys409 together coordinate heme.

This sequence belongs to the cytochrome P450 family. Heme serves as cofactor.

It localises to the endoplasmic reticulum membrane. It is found in the microsome membrane. May be involved in the metabolism of insect hormones and in the breakdown of synthetic insecticides. The protein is Cytochrome P450 4d8 (Cyp4d8) of Drosophila melanogaster (Fruit fly).